The primary structure comprises 624 residues: DNA mismatch repair protein MutL (624 aa).

The tract at residues 360–396 (GGNHFSQPAPRRETASTEPAVARERAPQPAYHSGSGY) is disordered. The span at 369–385 (PRRETASTEPAVARERA) shows a compositional bias: basic and acidic residues.

This sequence belongs to the DNA mismatch repair MutL/HexB family.

Its function is as follows. This protein is involved in the repair of mismatches in DNA. It is required for dam-dependent methyl-directed DNA mismatch repair. May act as a 'molecular matchmaker', a protein that promotes the formation of a stable complex between two or more DNA-binding proteins in an ATP-dependent manner without itself being part of a final effector complex. The chain is DNA mismatch repair protein MutL from Serratia proteamaculans (strain 568).